Consider the following 361-residue polypeptide: S-adenosylmethionine-dependent nucleotide dehydratase RSAD2 (361 aa).

In terms of domain architecture, Radical SAM core spans 69–289 (PTTPTSVNYH…LERHKEVSCL (221 aa)). [4Fe-4S] cluster is bound by residues Cys-83, Cys-87, and Cys-90. Lys-197 bears the N6-acetyllysine mark. A Glycyl lysine isopeptide (Lys-Gly) (interchain with G-Cter in ubiquitin) cross-link involves residue Lys-206.

The protein belongs to the radical SAM superfamily. RSAD2 family. Homodimer. Interacts with IRAK1 and TRAF6. Interacts with FPPS. Interacts with HADHB. Interacts (via C-terminus) with VAPA/VAP33 (via C-terminus). As to quaternary structure, (Microbial infection) Interacts with human cytomegalovirus/HHV-5 protein vMIA/UL37; this interaction results in RSAD2/viperin relocalization from the endoplasmic reticulum to the mitochondria. In terms of assembly, (Microbial infection) Interacts (via N-terminus) with enterovirus A71 protein 2C; this interaction inhibits viral replication. (Microbial infection) Interacts with herpes simplex virus 1/HHV-1 glycoprotein D; this interaction inhibits HHV-1 replication by facilitating IRF7-mediated IFN-beta production. It depends on [4Fe-4S] cluster as a cofactor. Post-translationally, acetylated by HAT1. HAT1-mediated acetylation of Lys-197 in turn recruits UBE4A that stimulates RSAD2 polyubiquitination leading to proteasomal degradation. 'Lys-6'-linked polyubiquitination at Lys-206 leads to RSAD2 protein degradation.

Its subcellular location is the endoplasmic reticulum membrane. It is found in the golgi apparatus. The protein resides in the endoplasmic reticulum. The protein localises to the lipid droplet. It localises to the mitochondrion. Its subcellular location is the mitochondrion inner membrane. It is found in the mitochondrion outer membrane. It carries out the reaction CTP + AH2 + S-adenosyl-L-methionine = 3'-deoxy-3',4'-didehydro-CTP + 5'-deoxyadenosine + L-methionine + A + H2O + H(+). IRAK1 and TRAF6 synergistically activate RSAD2 increasing its activity with CTP as substrate about 10-fold. Interferon-inducible antiviral protein which plays a major role in the cell antiviral state induced by type I and type II interferon. Catalyzes the conversion of cytidine triphosphate (CTP) to 3'-deoxy-3',4'-didehydro-CTP (ddhCTP) via a SAM-dependent radical mechanism. In turn, ddhCTP acts as a chain terminator for the RNA-dependent RNA polymerases from multiple viruses and directly inhibits viral replication. Therefore, inhibits a wide range of DNA and RNA viruses, including human cytomegalovirus (HCMV), hepatitis C virus (HCV), west Nile virus (WNV), dengue virus, sindbis virus, influenza A virus, sendai virus, vesicular stomatitis virus (VSV), zika virus, and human immunodeficiency virus (HIV-1). Also promotes TLR7 and TLR9-dependent production of IFN-beta production in plasmacytoid dendritic cells (pDCs) by facilitating 'Lys-63'-linked ubiquitination of IRAK1 by TRAF6. Plays a role in CD4+ T-cells activation and differentiation. Facilitates T-cell receptor (TCR)-mediated GATA3 activation and optimal T-helper 2 (Th2) cytokine production by modulating NFKB1 and JUNB activities. Can inhibit secretion of soluble proteins. The polypeptide is S-adenosylmethionine-dependent nucleotide dehydratase RSAD2 (Homo sapiens (Human)).